A 156-amino-acid chain; its full sequence is Mediator of RNA polymerase II transcription subunit 28 (156 aa).

The disordered stretch occupies residues 1–38 (MDYQQKPPQSSDPSPSPPDRPPGIRSPETPSNNQNNDI). Positions 104–156 (PSRAESLKKDIAVMEEELKTKDELIKKHMRLFQESQKLVKEQIEKHRDELEKV) form a coiled coil.

It belongs to the Mediator complex subunit 28 family. As to quaternary structure, dimers. Component of the Mediator complex. Interacts with GEBPL.

The protein localises to the nucleus. Component of the Mediator complex, a coactivator involved in the regulated transcription of nearly all RNA polymerase II-dependent genes. Mediator functions as a bridge to convey information from gene-specific regulatory proteins to the basal RNA polymerase II transcription machinery. The Mediator complex, having a compact conformation in its free form, is recruited to promoters by direct interactions with regulatory proteins and serves for the assembly of a functional pre-initiation complex with RNA polymerase II and the general transcription factors. This is Mediator of RNA polymerase II transcription subunit 28 from Arabidopsis thaliana (Mouse-ear cress).